Here is a 143-residue protein sequence, read N- to C-terminus: Putative pre-16S rRNA nuclease (143 aa).

The protein belongs to the YqgF nuclease family.

The protein localises to the cytoplasm. Functionally, could be a nuclease involved in processing of the 5'-end of pre-16S rRNA. This chain is Putative pre-16S rRNA nuclease, found in Leuconostoc mesenteroides subsp. mesenteroides (strain ATCC 8293 / DSM 20343 / BCRC 11652 / CCM 1803 / JCM 6124 / NCDO 523 / NBRC 100496 / NCIMB 8023 / NCTC 12954 / NRRL B-1118 / 37Y).